The following is a 311-amino-acid chain: Porphobilinogen deaminase (311 aa).

Residue Cys241 is modified to S-(dipyrrolylmethanemethyl)cysteine.

Belongs to the HMBS family. In terms of assembly, monomer. It depends on dipyrromethane as a cofactor.

The enzyme catalyses 4 porphobilinogen + H2O = hydroxymethylbilane + 4 NH4(+). It functions in the pathway porphyrin-containing compound metabolism; protoporphyrin-IX biosynthesis; coproporphyrinogen-III from 5-aminolevulinate: step 2/4. In terms of biological role, tetrapolymerization of the monopyrrole PBG into the hydroxymethylbilane pre-uroporphyrinogen in several discrete steps. This is Porphobilinogen deaminase from Shouchella clausii (strain KSM-K16) (Alkalihalobacillus clausii).